Reading from the N-terminus, the 179-residue chain is NADH-quinone oxidoreductase subunit B (179 aa).

[4Fe-4S] cluster contacts are provided by C52, C53, C117, and C147.

Belongs to the complex I 20 kDa subunit family. In terms of assembly, NDH-1 is composed of 14 different subunits. Subunits NuoB, C, D, E, F, and G constitute the peripheral sector of the complex. [4Fe-4S] cluster is required as a cofactor.

The protein resides in the cell inner membrane. It carries out the reaction a quinone + NADH + 5 H(+)(in) = a quinol + NAD(+) + 4 H(+)(out). In terms of biological role, NDH-1 shuttles electrons from NADH, via FMN and iron-sulfur (Fe-S) centers, to quinones in the respiratory chain. The immediate electron acceptor for the enzyme in this species is believed to be ubiquinone. Couples the redox reaction to proton translocation (for every two electrons transferred, four hydrogen ions are translocated across the cytoplasmic membrane), and thus conserves the redox energy in a proton gradient. The chain is NADH-quinone oxidoreductase subunit B from Ehrlichia chaffeensis (strain ATCC CRL-10679 / Arkansas).